We begin with the raw amino-acid sequence, 579 residues long: V-type ATP synthase alpha chain (579 aa).

Position 238–245 (238–245 (GPFGAGKT)) interacts with ATP.

Belongs to the ATPase alpha/beta chains family.

It carries out the reaction ATP + H2O + 4 H(+)(in) = ADP + phosphate + 5 H(+)(out). In terms of biological role, produces ATP from ADP in the presence of a proton gradient across the membrane. The V-type alpha chain is a catalytic subunit. The chain is V-type ATP synthase alpha chain from Borrelia hermsii (strain HS1 / DAH).